Here is a 378-residue protein sequence, read N- to C-terminus: Sperm microtubule associated protein 2 (378 aa).

2 disordered regions span residues 1–35 (MGEL…SDGS) and 47–79 (WLQS…LPEV). A compositionally biased stretch (polar residues) spans 47–56 (WLQSSQATTE). Acidic residues predominate over residues 61–77 (DPEEEIPPEEMVGEELP). THEG repeat units follow at residues 113-132 (AKCR…PKFN), 179-198 (TITV…PKRF), 217-236 (STLE…PKIR), 253-272 (AAQM…PRAP), 285-304 (PKPY…PKAL), 321-340 (VTKN…PKIR), and 355-374 (ASLV…PKHI). Serine 290 carries the post-translational modification Phosphoserine.

Interacts with CCT5.

The protein localises to the nucleus. In terms of biological role, may be involved (but not essential) in spermatogenesis. The sequence is that of Sperm microtubule associated protein 2 from Rattus norvegicus (Rat).